We begin with the raw amino-acid sequence, 308 residues long: 4-hydroxy-3-methylbut-2-enyl diphosphate reductase (308 aa).

Cys-12 serves as a coordination point for [4Fe-4S] cluster. 2 residues coordinate (2E)-4-hydroxy-3-methylbut-2-enyl diphosphate: His-41 and His-74. Residues His-41 and His-74 each coordinate dimethylallyl diphosphate. 2 residues coordinate isopentenyl diphosphate: His-41 and His-74. A [4Fe-4S] cluster-binding site is contributed by Cys-96. His-124 contributes to the (2E)-4-hydroxy-3-methylbut-2-enyl diphosphate binding site. His-124 lines the dimethylallyl diphosphate pocket. His-124 is a binding site for isopentenyl diphosphate. Glu-126 acts as the Proton donor in catalysis. Thr-166 serves as a coordination point for (2E)-4-hydroxy-3-methylbut-2-enyl diphosphate. Cys-196 serves as a coordination point for [4Fe-4S] cluster. Positions 224, 225, 226, and 268 each coordinate (2E)-4-hydroxy-3-methylbut-2-enyl diphosphate. 4 residues coordinate dimethylallyl diphosphate: Ser-224, Ser-225, Asn-226, and Ser-268. The isopentenyl diphosphate site is built by Ser-224, Ser-225, Asn-226, and Ser-268.

The protein belongs to the IspH family. The cofactor is [4Fe-4S] cluster.

It carries out the reaction isopentenyl diphosphate + 2 oxidized [2Fe-2S]-[ferredoxin] + H2O = (2E)-4-hydroxy-3-methylbut-2-enyl diphosphate + 2 reduced [2Fe-2S]-[ferredoxin] + 2 H(+). It catalyses the reaction dimethylallyl diphosphate + 2 oxidized [2Fe-2S]-[ferredoxin] + H2O = (2E)-4-hydroxy-3-methylbut-2-enyl diphosphate + 2 reduced [2Fe-2S]-[ferredoxin] + 2 H(+). It functions in the pathway isoprenoid biosynthesis; dimethylallyl diphosphate biosynthesis; dimethylallyl diphosphate from (2E)-4-hydroxy-3-methylbutenyl diphosphate: step 1/1. The protein operates within isoprenoid biosynthesis; isopentenyl diphosphate biosynthesis via DXP pathway; isopentenyl diphosphate from 1-deoxy-D-xylulose 5-phosphate: step 6/6. In terms of biological role, catalyzes the conversion of 1-hydroxy-2-methyl-2-(E)-butenyl 4-diphosphate (HMBPP) into a mixture of isopentenyl diphosphate (IPP) and dimethylallyl diphosphate (DMAPP). Acts in the terminal step of the DOXP/MEP pathway for isoprenoid precursor biosynthesis. The protein is 4-hydroxy-3-methylbut-2-enyl diphosphate reductase of Vesicomyosocius okutanii subsp. Calyptogena okutanii (strain HA).